Here is a 144-residue protein sequence, read N- to C-terminus: Large ribosomal subunit protein uL22 (144 aa).

The disordered stretch occupies residues 1-38 (MAETQTTKKGAKRVRQPVPARRSKPNRPAKAAPGPHAS). Positions 9–27 (KGAKRVRQPVPARRSKPNR) are enriched in basic residues.

It belongs to the universal ribosomal protein uL22 family. Part of the 50S ribosomal subunit.

Functionally, this protein binds specifically to 23S rRNA; its binding is stimulated by other ribosomal proteins, e.g. L4, L17, and L20. It is important during the early stages of 50S assembly. It makes multiple contacts with different domains of the 23S rRNA in the assembled 50S subunit and ribosome. Its function is as follows. The globular domain of the protein is located near the polypeptide exit tunnel on the outside of the subunit, while an extended beta-hairpin is found that lines the wall of the exit tunnel in the center of the 70S ribosome. This Anaeromyxobacter sp. (strain Fw109-5) protein is Large ribosomal subunit protein uL22.